The primary structure comprises 276 residues: Putative glycosyltransferase 6 domain-containing protein 1 (276 aa).

Over 1–6 (MNSKRM) the chain is Cytoplasmic. The chain crosses the membrane as a helical; Signal-anchor for type II membrane protein span at residues 7–23 (LLLVLFAFSLMLVERYF). The Lumenal segment spans residues 24–276 (RNHQVEELRL…NKYFYLNKPT (253 aa)). A glycan (N-linked (GlcNAc...) asparagine) is linked at Asn74. Substrate contacts are provided by residues 82–87 (FATGRF), 173–175 (AAN), and 195–198 (HAWW). Glu263 acts as the Nucleophile in catalysis.

It belongs to the glycosyltransferase 6 family. The cofactor is Mn(2+). In terms of tissue distribution, expressed in both healthy and inflamed gingival tissue samples at similar levels, with higher expression in the gingival connective tissue compared to gingival epithelium. Strongest expression in testis, followed by leukocytes.

The protein resides in the membrane. In Homo sapiens (Human), this protein is Putative glycosyltransferase 6 domain-containing protein 1 (GLT6D1).